We begin with the raw amino-acid sequence, 380 residues long: Homoserine O-acetyltransferase (380 aa).

The AB hydrolase-1 domain maps to Asn-59–Glu-363. The active-site Nucleophile is Ser-164. Position 234 (Arg-234) interacts with substrate. Catalysis depends on residues Asp-327 and His-357. Asp-358 lines the substrate pocket.

Belongs to the AB hydrolase superfamily. MetX family. As to quaternary structure, homodimer.

The protein localises to the cytoplasm. It catalyses the reaction L-homoserine + acetyl-CoA = O-acetyl-L-homoserine + CoA. The protein operates within amino-acid biosynthesis; L-methionine biosynthesis via de novo pathway; O-acetyl-L-homoserine from L-homoserine: step 1/1. In terms of biological role, transfers an acetyl group from acetyl-CoA to L-homoserine, forming acetyl-L-homoserine. In Mycolicibacterium smegmatis (strain ATCC 700084 / mc(2)155) (Mycobacterium smegmatis), this protein is Homoserine O-acetyltransferase.